The chain runs to 373 residues: 4-hydroxy-3-methylbut-2-en-1-yl diphosphate synthase (flavodoxin) (373 aa).

Positions 270, 273, 305, and 312 each coordinate [4Fe-4S] cluster.

The protein belongs to the IspG family. [4Fe-4S] cluster is required as a cofactor.

It carries out the reaction (2E)-4-hydroxy-3-methylbut-2-enyl diphosphate + oxidized [flavodoxin] + H2O + 2 H(+) = 2-C-methyl-D-erythritol 2,4-cyclic diphosphate + reduced [flavodoxin]. Its pathway is isoprenoid biosynthesis; isopentenyl diphosphate biosynthesis via DXP pathway; isopentenyl diphosphate from 1-deoxy-D-xylulose 5-phosphate: step 5/6. In terms of biological role, converts 2C-methyl-D-erythritol 2,4-cyclodiphosphate (ME-2,4cPP) into 1-hydroxy-2-methyl-2-(E)-butenyl 4-diphosphate. The protein is 4-hydroxy-3-methylbut-2-en-1-yl diphosphate synthase (flavodoxin) of Photobacterium profundum (strain SS9).